The following is a 351-amino-acid chain: Uroporphyrinogen decarboxylase (351 aa).

Substrate-binding positions include Arg25–Arg29, Asp74, Tyr151, Ser206, and His325.

The protein belongs to the uroporphyrinogen decarboxylase family. In terms of assembly, homodimer.

It is found in the cytoplasm. It catalyses the reaction uroporphyrinogen III + 4 H(+) = coproporphyrinogen III + 4 CO2. Its pathway is porphyrin-containing compound metabolism; protoporphyrin-IX biosynthesis; coproporphyrinogen-III from 5-aminolevulinate: step 4/4. Catalyzes the decarboxylation of four acetate groups of uroporphyrinogen-III to yield coproporphyrinogen-III. The sequence is that of Uroporphyrinogen decarboxylase from Prosthecochloris aestuarii (strain DSM 271 / SK 413).